The sequence spans 515 residues: Protein translocase subunit SecD (515 aa).

6 helical membrane passes run 5–25, 353–373, 375–395, 398–418, 450–470, and 477–497; these read LIAK…LATP, KGIL…VAYY, LSGL…MGLL, FGAT…GIAV, FSTI…LFQF, and GFAV…ILCT.

Belongs to the SecD/SecF family. SecD subfamily. In terms of assembly, forms a complex with SecF. Part of the essential Sec protein translocation apparatus which comprises SecA, SecYEG and auxiliary proteins SecDF. Other proteins may also be involved.

It is found in the cell inner membrane. In terms of biological role, part of the Sec protein translocase complex. Interacts with the SecYEG preprotein conducting channel. SecDF uses the proton motive force (PMF) to complete protein translocation after the ATP-dependent function of SecA. This is Protein translocase subunit SecD from Desulfurispirillum indicum (strain ATCC BAA-1389 / DSM 22839 / S5).